The chain runs to 113 residues: P antigen family member 3 (113 aa).

The span at 1–12 (MSGHQRTRSRSR) shows a compositional bias: basic residues. 2 disordered regions span residues 1–61 (MSGH…EGAL) and 78–113 (SKTG…QPSV).

The protein belongs to the GAGE family.

This Homo sapiens (Human) protein is P antigen family member 3 (PAGE3).